The primary structure comprises 318 residues: tRNA uridine(34) hydroxylase (318 aa).

A Rhodanese domain is found at 123–217; sequence EDDDTVIIDA…YGKDPETKGQ (95 aa). The active-site Cysteine persulfide intermediate is the Cys177.

It belongs to the TrhO family.

It carries out the reaction uridine(34) in tRNA + AH2 + O2 = 5-hydroxyuridine(34) in tRNA + A + H2O. Functionally, catalyzes oxygen-dependent 5-hydroxyuridine (ho5U) modification at position 34 in tRNAs. This Staphylococcus aureus (strain bovine RF122 / ET3-1) protein is tRNA uridine(34) hydroxylase.